The following is a 313-amino-acid chain: tRNA dimethylallyltransferase (313 aa).

11–18 (GPTACGKT) is a binding site for ATP. Residue 13 to 18 (TACGKT) participates in substrate binding. Interaction with substrate tRNA regions lie at residues 36 to 39 (DSAL), 160 to 164 (QRIGR), and 243 to 248 (RCVGYR).

It belongs to the IPP transferase family. As to quaternary structure, monomer. Mg(2+) serves as cofactor.

It catalyses the reaction adenosine(37) in tRNA + dimethylallyl diphosphate = N(6)-dimethylallyladenosine(37) in tRNA + diphosphate. Catalyzes the transfer of a dimethylallyl group onto the adenine at position 37 in tRNAs that read codons beginning with uridine, leading to the formation of N6-(dimethylallyl)adenosine (i(6)A). The polypeptide is tRNA dimethylallyltransferase (Neisseria gonorrhoeae (strain ATCC 700825 / FA 1090)).